We begin with the raw amino-acid sequence, 236 residues long: Ribonuclease 3 (236 aa).

The RNase III domain maps to 13 to 138 (TEKVFKISGY…LIGAIYVDGG (126 aa)). A Mg(2+)-binding site is contributed by Glu51. Residue Asp55 is part of the active site. 2 residues coordinate Mg(2+): Asn124 and Glu127. Glu127 is a catalytic residue. Residues 164–232 (DAKTALQEWA…AKLMLEKVTK (69 aa)) form the DRBM domain.

Belongs to the ribonuclease III family. As to quaternary structure, homodimer. Mg(2+) serves as cofactor.

The protein resides in the cytoplasm. The catalysed reaction is Endonucleolytic cleavage to 5'-phosphomonoester.. In terms of biological role, digests double-stranded RNA. Involved in the processing of primary rRNA transcript to yield the immediate precursors to the large and small rRNAs (23S and 16S). Processes some mRNAs, and tRNAs when they are encoded in the rRNA operon. Processes pre-crRNA and tracrRNA of type II CRISPR loci if present in the organism. The protein is Ribonuclease 3 of Anaplasma phagocytophilum (strain HZ).